A 370-amino-acid polypeptide reads, in one-letter code: Vasopressin V2 receptor (370 aa).

Residues 1–10 show a composition bias toward polar residues; the sequence is MLLASTTSAV. The disordered stretch occupies residues 1–26; it reads MLLASTTSAVPRTLSPPTPAGNGSRE. Residues 1 to 37 lie on the Extracellular side of the membrane; it reads MLLASTTSAVPRTLSPPTPAGNGSRELLDTRDPLLVQ. Asn22 is a glycosylation site (N-linked (GlcNAc...) asparagine). The chain crosses the membrane as a helical span at residues 38 to 62; it reads AELALLSTVFVAVALSNGLVLGALA. Residues 63-76 lie on the Cytoplasmic side of the membrane; the sequence is RRVRRGRWAPMHVF. Residues 77 to 97 traverse the membrane as a helical segment; the sequence is IGHLCLADLAVALFQVLPQLA. At 98 to 112 the chain is on the extracellular side; it reads WDATDRFRGPDALCR. The helical transmembrane segment at 113-134 threads the bilayer; the sequence is AVKYLQMVGMYASSYMILAMTL. At 135-158 the chain is on the cytoplasmic side; that stretch reads DRHRAICRPMLAYRHGGGARWNRP. A helical membrane pass occupies residues 159 to 179; sequence VLVAWAFSLILSLPQLFIFAQ. The Extracellular segment spans residues 180-199; the sequence is RDVGNGSGVLDCWAHFAEPW. Residues 200 to 219 form a helical membrane-spanning segment; sequence GLRAYVTWIALMVFVAPALG. Over 220–270 the chain is Cytoplasmic; it reads IAACQVLIFREIHSSLVPGPAERAGGCRGGHRTGSPSEGARVSAAMAKTVR. The chain crosses the membrane as a helical span at residues 271 to 292; sequence MTLVIVIVYVLCWAPFFLVQLW. Over 293 to 307 the chain is Extracellular; the sequence is AAWDPQAPLEGAPFV. The chain crosses the membrane as a helical span at residues 308-327; that stretch reads LLMLLASLNSCTNPWIYAFF. At 328–370 the chain is on the cytoplasmic side; the sequence is SSSVSSELRSLFCWARSRAPPSLGPQEESCATASSFLAKDTSS. The S-palmitoyl cysteine moiety is linked to residue Cys340.

It belongs to the G-protein coupled receptor 1 family. Vasopressin/oxytocin receptor subfamily. As to quaternary structure, interacts with ARRDC4. Identified in a complex containing at least ARRDC4, V2R and HGS. Interacts with TMEM147.

The protein resides in the cell membrane. Functionally, receptor for arginine vasopressin. The activity of this receptor is mediated by G proteins which activate adenylate cyclase. Involved in renal water reabsorption. The chain is Vasopressin V2 receptor (AVPR2) from Canis lupus familiaris (Dog).